The primary structure comprises 108 residues: Nucleoid-associated protein HEAR1046 (108 aa).

The interval 86–108 is disordered; that stretch reads TSQEKMAGATAGMPMPPGFKMPF. Pro residues predominate over residues 99-108; it reads PMPPGFKMPF.

Belongs to the YbaB/EbfC family. As to quaternary structure, homodimer.

Its subcellular location is the cytoplasm. It localises to the nucleoid. Binds to DNA and alters its conformation. May be involved in regulation of gene expression, nucleoid organization and DNA protection. In Herminiimonas arsenicoxydans, this protein is Nucleoid-associated protein HEAR1046.